Consider the following 332-residue polypeptide: HPr kinase/phosphorylase (332 aa).

Active-site residues include His153 and Lys174. Position 168–175 (168–175 (GKSGLGKS)) interacts with ATP. Mg(2+) is bound at residue Ser175. Asp192 acts as the Proton acceptor; for phosphorylation activity. Proton donor; for dephosphorylation activity in catalysis. The important for the catalytic mechanism of both phosphorylation and dephosphorylation stretch occupies residues 217-226 (MEIRGLGVVD). Glu218 lines the Mg(2+) pocket. Arg259 is a catalytic residue. An important for the catalytic mechanism of dephosphorylation region spans residues 280-285 (PIFPGK).

This sequence belongs to the HPrK/P family. Homohexamer. Mg(2+) is required as a cofactor.

The enzyme catalyses [HPr protein]-L-serine + ATP = [HPr protein]-O-phospho-L-serine + ADP + H(+). It catalyses the reaction [HPr protein]-O-phospho-L-serine + phosphate + H(+) = [HPr protein]-L-serine + diphosphate. In terms of biological role, catalyzes the ATP- as well as the pyrophosphate-dependent phosphorylation of a specific serine residue in HPr, a phosphocarrier protein of the phosphoenolpyruvate-dependent sugar phosphotransferase system (PTS). HprK/P also catalyzes the pyrophosphate-producing, inorganic phosphate-dependent dephosphorylation (phosphorolysis) of seryl-phosphorylated HPr (P-Ser-HPr). This is HPr kinase/phosphorylase from Chlorobium luteolum (strain DSM 273 / BCRC 81028 / 2530) (Pelodictyon luteolum).